We begin with the raw amino-acid sequence, 631 residues long: MBT domain-containing protein 1 (631 aa).

The disordered stretch occupies residues 1–31 (MFDGYDSCSEDTSSSSSSEESEEEVAPLPSN). An FCS-type zinc finger spans residues 45 to 80 (PDGKSGMATCEMCGMVGVRDAFYSKTKRFCSVSCSR). Zn(2+)-binding residues include Cys54, Cys57, Cys74, and Cys78. N6-acetyllysine is present on Lys115. 4 MBT repeats span residues 144–248 (FSWG…LVPP), 256–353 (TNWK…IGHR), 354–459 (FKRS…LTPP), and 467–563 (FKWF…LQPP). The segment at 563–631 (PASQSSRESQ…SATVYIKQEP (69 aa)) is disordered. The span at 564-576 (ASQSSRESQSASS) shows a compositional bias: low complexity. A compositionally biased stretch (basic residues) spans 577 to 593 (KQKKKAKSQQYKGHKKM).

As to quaternary structure, monomer. Component of the NuA4 histone acetyltransferase complex. Interacts with EPC1; interaction is direct and promotes recruitment of MBTD1 into the NuA4 histone acetyltransferase complex.

It is found in the nucleus. The protein resides in the chromosome. Chromatin reader component of the NuA4 histone acetyltransferase complex, a multiprotein complex involved in transcriptional activation of select genes principally by acetylation of nucleosomal histones H4 and H2A. The NuA4 complex plays a direct role in repair of DNA double-strand breaks (DSBs) by promoting homologous recombination (HR). MBTD1 specifically recognizes and binds monomethylated and dimethylated 'Lys-20' on histone H4 (H4K20me1 and H4K20me2, respectively). In the NuA4 complex, MBTD1 promotes recruitment of the complex to H4K20me marks by competing with TP53BP1 for binding to H4K20me. Following recruitment to H4K20me at DNA breaks, the NuA4 complex catalyzes acetylation of 'Lys-15' on histone H2A (H2AK15), blocking the ubiquitination mark required for TP53BP1 localization at DNA breaks, thereby promoting homologous recombination (HR). This is MBT domain-containing protein 1 from Mus musculus (Mouse).